Here is a 261-residue protein sequence, read N- to C-terminus: Uridine-cytidine kinase 2 (261 aa).

The span at 1–16 (MAGDSEQTLQNHQQPN) shows a compositional bias: polar residues. Residues 1-24 (MAGDSEQTLQNHQQPNGGEPFLIG) are disordered. An N-acetylalanine modification is found at alanine 2. Residue 27 to 35 (GGTASGKSS) coordinates ATP. 6 residues coordinate substrate: aspartate 84, tyrosine 112, histidine 117, arginine 166, arginine 176, and glutamine 184. Aspartate 213 is an ATP binding site. Residues 240-261 (GYLNGYTPSRKRQASESSSRPH) form a disordered region. Phosphoserine is present on serine 254.

The protein belongs to the uridine kinase family. As to quaternary structure, homotetramer.

The catalysed reaction is uridine + ATP = UMP + ADP + H(+). It carries out the reaction cytidine + ATP = CMP + ADP + H(+). The protein operates within pyrimidine metabolism; CTP biosynthesis via salvage pathway; CTP from cytidine: step 1/3. It participates in pyrimidine metabolism; UMP biosynthesis via salvage pathway; UMP from uridine: step 1/1. In terms of biological role, phosphorylates uridine and cytidine to uridine monophosphate and cytidine monophosphate. Does not phosphorylate deoxyribonucleosides or purine ribonucleosides. Can use ATP or GTP as a phosphate donor. The polypeptide is Uridine-cytidine kinase 2 (Uck2) (Mus musculus (Mouse)).